Consider the following 72-residue polypeptide: MAKEDCIEMQGTILETLPNTMFRVELENGHIVAAHISGKMRKNYIRILTGDKVTVEMTPYDLSKARIIFRAR.

One can recognise an S1-like domain in the interval 1–72 (MAKEDCIEMQ…SKARIIFRAR (72 aa)).

It belongs to the IF-1 family. Component of the 30S ribosomal translation pre-initiation complex which assembles on the 30S ribosome in the order IF-2 and IF-3, IF-1 and N-formylmethionyl-tRNA(fMet); mRNA recruitment can occur at any time during PIC assembly.

Its subcellular location is the cytoplasm. One of the essential components for the initiation of protein synthesis. Stabilizes the binding of IF-2 and IF-3 on the 30S subunit to which N-formylmethionyl-tRNA(fMet) subsequently binds. Helps modulate mRNA selection, yielding the 30S pre-initiation complex (PIC). Upon addition of the 50S ribosomal subunit IF-1, IF-2 and IF-3 are released leaving the mature 70S translation initiation complex. This Haemophilus ducreyi (strain 35000HP / ATCC 700724) protein is Translation initiation factor IF-1.